The sequence spans 451 residues: MNTNNRHYHITTFGCQMNKADSERMAGILDNMGLISSEDPNKADIILYNTCTIRDNAEQKVYSYLGRQAKRKHKQPDLTLIVAGCVAQQEGAALLRRVPELDLIMGPQHANRLQDLLEQVFNGNQVVATEPIHIVEDITKPRRDSKITAWVNIIYGCNEHCTYCVVPSVRGVEQSRTPEAIRAEMEELGRQGYQEITLLGQNIDAYGRDLPGVTKEGRNKYTFTDLLYYVHDVPGVERIRFATSHPRYFTERLIRACAELPKVCEHFHIPFQSGDNKLLKAMARGYTHEKYRRIIDKIRELMPDASISADAIVGFPGETEAQFENTLKLVEDIGFDQLNTAAYSPRPGTPAALWENQLGEEVKSDRLQRLNHLVGVKAADRSQRYMGRIEEVLVEDMNPKNAAQVMGRTRGNRLTFFEGDIAQLKGKLVKVKITEVRPFSLTGEVKEFVLV.

The MTTase N-terminal domain maps to 6–122; it reads RHYHITTFGC…LQDLLEQVFN (117 aa). [4Fe-4S] cluster contacts are provided by Cys15, Cys51, Cys85, Cys157, Cys161, and Cys164. A Radical SAM core domain is found at 143–380; the sequence is RDSKITAWVN…NHLVGVKAAD (238 aa). A TRAM domain is found at 383 to 447; it reads QRYMGRIEEV…PFSLTGEVKE (65 aa).

It belongs to the methylthiotransferase family. MiaB subfamily. As to quaternary structure, monomer. It depends on [4Fe-4S] cluster as a cofactor.

The protein localises to the cytoplasm. The catalysed reaction is N(6)-dimethylallyladenosine(37) in tRNA + (sulfur carrier)-SH + AH2 + 2 S-adenosyl-L-methionine = 2-methylsulfanyl-N(6)-dimethylallyladenosine(37) in tRNA + (sulfur carrier)-H + 5'-deoxyadenosine + L-methionine + A + S-adenosyl-L-homocysteine + 2 H(+). Its function is as follows. Catalyzes the methylthiolation of N6-(dimethylallyl)adenosine (i(6)A), leading to the formation of 2-methylthio-N6-(dimethylallyl)adenosine (ms(2)i(6)A) at position 37 in tRNAs that read codons beginning with uridine. The polypeptide is tRNA-2-methylthio-N(6)-dimethylallyladenosine synthase (Trichodesmium erythraeum (strain IMS101)).